A 200-amino-acid polypeptide reads, in one-letter code: Somatotropin (200 aa).

Residues 1–22 (MARVLVVLSVVVASLFFSQGAT) form the signal peptide. Residue H38 participates in Zn(2+) binding. The cysteines at positions 71 and 173 are disulfide-linked. E182 serves as a coordination point for Zn(2+). Cysteines 190 and 198 form a disulfide.

The protein belongs to the somatotropin/prolactin family.

It is found in the secreted. In terms of biological role, growth hormone plays an important role in growth control and is involved in the regulation of several anabolic processes. Implicated as an osmoregulatory substance important for seawater adaptation. In Pangasianodon gigas (Mekong giant catfish), this protein is Somatotropin (gh).